A 248-amino-acid chain; its full sequence is MTKLEICCFSVGCALIAQQAGADRIELCASPAEGGLTPSFGTLKQAIEQLTIPVYPIVRPRGGDFCYSHSDFEVMKNDVAQIRDMGFMGVVFGVLDEEGHIDLPRMQQLMALSGDMAVTFHRAFDMCFNPYVALDQLTQLGVKRILTSGQQQNAELGLPLLKELHQASQGPIIMAGAGVRMSNIHKFIDIGLTEVHSSASRIMLSTMTYRKAGVTMSADNEVDEFSHYCVDGGVVEVMKGMLSLTLFE.

It belongs to the CutC family.

The protein resides in the cytoplasm. The protein is PF03932 family protein CutC of Photorhabdus laumondii subsp. laumondii (strain DSM 15139 / CIP 105565 / TT01) (Photorhabdus luminescens subsp. laumondii).